The chain runs to 458 residues: ATP synthase subunit beta (458 aa).

Residue 148–155 coordinates ATP; sequence GGAGVGKT.

Belongs to the ATPase alpha/beta chains family. F-type ATPases have 2 components, CF(1) - the catalytic core - and CF(0) - the membrane proton channel. CF(1) has five subunits: alpha(3), beta(3), gamma(1), delta(1), epsilon(1). CF(0) has three main subunits: a(1), b(2) and c(9-12). The alpha and beta chains form an alternating ring which encloses part of the gamma chain. CF(1) is attached to CF(0) by a central stalk formed by the gamma and epsilon chains, while a peripheral stalk is formed by the delta and b chains.

Its subcellular location is the cell inner membrane. It carries out the reaction ATP + H2O + 4 H(+)(in) = ADP + phosphate + 5 H(+)(out). Its function is as follows. Produces ATP from ADP in the presence of a proton gradient across the membrane. The catalytic sites are hosted primarily by the beta subunits. The polypeptide is ATP synthase subunit beta (Halorhodospira halophila (strain DSM 244 / SL1) (Ectothiorhodospira halophila (strain DSM 244 / SL1))).